A 64-amino-acid chain; its full sequence is Beta-defensin 1 (64 aa).

A signal peptide spans 1–20 (MRLHHLLLVLFFLVLSAGSG). Positions 21 to 26 (FTQGIR) are excised as a propeptide. Cystine bridges form between Cys-31–Cys-60, Cys-38–Cys-53, and Cys-43–Cys-61.

This sequence belongs to the beta-defensin family. In terms of assembly, monomer. Homodimer.

Its subcellular location is the secreted. The protein resides in the membrane. Its function is as follows. Has bactericidal activity. May act as a ligand for C-C chemokine receptor CCR6. Positively regulates the sperm motility and bactericidal activity in a CCR6-dependent manner. Binds to CCR6 and triggers Ca2+ mobilization in the sperm which is important for its motility. This Capra hircus (Goat) protein is Beta-defensin 1 (DEFB1).